A 200-amino-acid polypeptide reads, in one-letter code: Thymidylate kinase (200 aa).

ATP is bound at residue 10–17 (GIDGAGKS).

The protein belongs to the thymidylate kinase family.

It catalyses the reaction dTMP + ATP = dTDP + ADP. Functionally, phosphorylation of dTMP to form dTDP in both de novo and salvage pathways of dTTP synthesis. The chain is Thymidylate kinase from Cupriavidus metallidurans (strain ATCC 43123 / DSM 2839 / NBRC 102507 / CH34) (Ralstonia metallidurans).